A 150-amino-acid polypeptide reads, in one-letter code: MSLYEHVFLVRQDVTAQQVEELAARFKGVIEANGGTVSKVEAWGVKSLTYRIKKNRKAHFTLFNIDAPAAAVQEMERQMGIDEDVLRFLTIRVDELEEGPSAMLQKRDRDDRGERGERGFGGGGFGGGRDREDRPRRGRDREEAATEETF.

The tract at residues 99–150 is disordered; the sequence is GPSAMLQKRDRDDRGERGERGFGGGGFGGGRDREDRPRRGRDREEAATEETF. Composition is skewed to basic and acidic residues over residues 105 to 118 and 128 to 144; these read QKRDRDDRGERGER and GRDREDRPRRGRDREEA.

Belongs to the bacterial ribosomal protein bS6 family.

In terms of biological role, binds together with bS18 to 16S ribosomal RNA. This chain is Small ribosomal subunit protein bS6, found in Azorhizobium caulinodans (strain ATCC 43989 / DSM 5975 / JCM 20966 / LMG 6465 / NBRC 14845 / NCIMB 13405 / ORS 571).